The following is a 273-amino-acid chain: Urease accessory protein UreD (273 aa).

Belongs to the UreD family. In terms of assembly, ureD, UreF and UreG form a complex that acts as a GTP-hydrolysis-dependent molecular chaperone, activating the urease apoprotein by helping to assemble the nickel containing metallocenter of UreC. The UreE protein probably delivers the nickel.

Its subcellular location is the cytoplasm. Its function is as follows. Required for maturation of urease via the functional incorporation of the urease nickel metallocenter. This Rhizobium rhizogenes (strain K84 / ATCC BAA-868) (Agrobacterium radiobacter) protein is Urease accessory protein UreD.